The primary structure comprises 388 residues: Chorismate synthase (388 aa).

2 residues coordinate NADP(+): Arg-39 and Arg-45. Residues 130–132 (RSS), 251–252 (NA), Gly-296, 311–315 (KPIPT), and Arg-337 each bind FMN.

The protein belongs to the chorismate synthase family. In terms of assembly, homotetramer. It depends on FMNH2 as a cofactor.

It catalyses the reaction 5-O-(1-carboxyvinyl)-3-phosphoshikimate = chorismate + phosphate. Its pathway is metabolic intermediate biosynthesis; chorismate biosynthesis; chorismate from D-erythrose 4-phosphate and phosphoenolpyruvate: step 7/7. Functionally, catalyzes the anti-1,4-elimination of the C-3 phosphate and the C-6 proR hydrogen from 5-enolpyruvylshikimate-3-phosphate (EPSP) to yield chorismate, which is the branch point compound that serves as the starting substrate for the three terminal pathways of aromatic amino acid biosynthesis. This reaction introduces a second double bond into the aromatic ring system. This Lactococcus lactis subsp. lactis (strain IL1403) (Streptococcus lactis) protein is Chorismate synthase.